A 512-amino-acid chain; its full sequence is Lysine--tRNA ligase (512 aa).

Residues Glu-422 and Glu-429 each contribute to the Mg(2+) site.

The protein belongs to the class-II aminoacyl-tRNA synthetase family. As to quaternary structure, homodimer. It depends on Mg(2+) as a cofactor.

The protein localises to the cytoplasm. It catalyses the reaction tRNA(Lys) + L-lysine + ATP = L-lysyl-tRNA(Lys) + AMP + diphosphate. The sequence is that of Lysine--tRNA ligase from Paraburkholderia phymatum (strain DSM 17167 / CIP 108236 / LMG 21445 / STM815) (Burkholderia phymatum).